Here is a 271-residue protein sequence, read N- to C-terminus: Mannosyl-3-phosphoglycerate phosphatase (271 aa).

Residue D13 is the Nucleophile of the active site. Residues D13, D15, and D214 each coordinate Mg(2+).

The protein belongs to the HAD-like hydrolase superfamily. MPGP family. The cofactor is Mg(2+).

The protein localises to the cytoplasm. It catalyses the reaction 2-O-(alpha-D-mannosyl)-3-phosphoglycerate + H2O = (2R)-2-O-(alpha-D-mannosyl)-glycerate + phosphate. The polypeptide is Mannosyl-3-phosphoglycerate phosphatase (Escherichia coli O45:K1 (strain S88 / ExPEC)).